The primary structure comprises 461 residues: Sensor histidine kinase MctS (461 aa).

Transmembrane regions (helical) follow at residues 7 to 27 (IIAL…TFIT) and 203 to 223 (FVIV…TCML). A Phosphohistidine; by autocatalysis modification is found at histidine 259. Residues 360–450 (LYRVAQEAFN…TLTAMMPKSA (91 aa)) form the Histidine kinase domain.

The protein resides in the cell membrane. It carries out the reaction ATP + protein L-histidine = ADP + protein N-phospho-L-histidine.. In terms of biological role, member of the two-component regulatory system MctS/MctR, which activates mctP expression. The protein is Sensor histidine kinase MctS of Rhizobium johnstonii (strain DSM 114642 / LMG 32736 / 3841) (Rhizobium leguminosarum bv. viciae).